We begin with the raw amino-acid sequence, 259 residues long: MSGVSFELGGVSISSRLVLGTGGAANLHVLEQAIRAAGTGLVTVALRRVDSTPGGSGGLLDLIDRCGVRLLPNTAGCYTAGEAVKVAHLAREAFDTDWVKLEVIGDERTLLPDGVELLRAAEELVAEGFTVLPYTSDDPILARRLADVGCAAVMPAGSPIGSGLGVSNPHHIRLIRQCVDVPVILDAGIGTASDAALAMELGCDAVLLASAVTRAADPVAMATAMRYAVEAGRLAYRAGRIPRRFHALASTPDDGRPEL.

The active-site Schiff-base intermediate with DXP is the lysine 100. 1-deoxy-D-xylulose 5-phosphate contacts are provided by residues glycine 161, alanine 187–glycine 188, and alanine 209–serine 210.

The protein belongs to the ThiG family. In terms of assembly, homotetramer. Forms heterodimers with either ThiH or ThiS.

It localises to the cytoplasm. The catalysed reaction is [ThiS sulfur-carrier protein]-C-terminal-Gly-aminoethanethioate + 2-iminoacetate + 1-deoxy-D-xylulose 5-phosphate = [ThiS sulfur-carrier protein]-C-terminal Gly-Gly + 2-[(2R,5Z)-2-carboxy-4-methylthiazol-5(2H)-ylidene]ethyl phosphate + 2 H2O + H(+). It participates in cofactor biosynthesis; thiamine diphosphate biosynthesis. Catalyzes the rearrangement of 1-deoxy-D-xylulose 5-phosphate (DXP) to produce the thiazole phosphate moiety of thiamine. Sulfur is provided by the thiocarboxylate moiety of the carrier protein ThiS. In vitro, sulfur can be provided by H(2)S. In Salinispora arenicola (strain CNS-205), this protein is Thiazole synthase.